Here is a 258-residue protein sequence, read N- to C-terminus: Apolipoprotein A-I (258 aa).

An N-terminal signal peptide occupies residues 1-18 (MKFLVLALTILLAAGTQA). Residues 32 to 63 (VKAALNMYIAQVKLTAQRSIDLLDDTEYKEYK) form a 3 X approximate tandem repeats region. 2 repeat units span residues 64 to 85 (MQLSQSLDNLQQFADSTSKSWP) and 86 to 106 (PTPRSSAPSCDATATVRAEVM). Positions 64–258 (MQLSQSLDNL…WLSTRPSARP (195 aa)) are 10 X approximate tandem repeats. The 3; half-length repeat unit spans residues 107–117 (KDVEDVRTQLE). 7 repeat units span residues 118–139 (PKRAELTEVLNKHIDEYRKKLE), 140–161 (PLIKQHIELRRTEMDAFRAKID), 162–183 (PVVEEMRAKVAVNVEETKTKLM), 184–205 (PIVEIVRAKLTERLEELRTLAA), 206–227 (PYAEEYKEQMFKAVGEVREKVA), 228–238 (PLSEDFKARWA), and 239–258 (PPPRRPSKSSWLSTRPSARP). Residues 233–258 (FKARWAPPPRRPSKSSWLSTRPSARP) form a disordered region. Residues 246-258 (KSSWLSTRPSARP) show a composition bias toward polar residues.

It belongs to the apolipoprotein A1/A4/E family. Major protein of plasma HDL, also found in chylomicrons. Expressed in liver, intestine and muscle.

It is found in the secreted. Functionally, participates in the reverse transport of cholesterol from tissues to the liver for excretion by promoting cholesterol efflux from tissues and by acting as a cofactor for the lecithin cholesterol acyltransferase (LCAT). The protein is Apolipoprotein A-I (apoa1) of Salmo salar (Atlantic salmon).